The sequence spans 96 residues: UPF0251 protein VPA0321 (96 aa).

Belongs to the UPF0251 family.

In Vibrio parahaemolyticus serotype O3:K6 (strain RIMD 2210633), this protein is UPF0251 protein VPA0321.